The primary structure comprises 148 residues: NPC intracellular cholesterol transporter 2 homolog a (148 aa).

A signal peptide spans 1-16; that stretch reads MLRYAVIACAALVVFA. Disulfide bonds link C24–C140, C39–C46, and C92–C99. The N-linked (GlcNAc...) asparagine glycan is linked to N51.

It belongs to the NPC2 family. Broadly expressed with a higher level of expression in many tissues, including midgut, salivary gland and ventral nerve cord.

It is found in the secreted. In terms of biological role, functions redundantly with Npc2b in regulating sterol homeostasis and ecdysteroid biosynthesis, probably by controlling the availability of sterol substrate. The protein is NPC intracellular cholesterol transporter 2 homolog a of Drosophila melanogaster (Fruit fly).